Reading from the N-terminus, the 668-residue chain is Probable metal-nicotianamine transporter YSL5 (668 aa).

Over residues 1 to 11 (MPPPETSSAAA) the composition is skewed to low complexity. The disordered stretch occupies residues 1–22 (MPPPETSSAAAPSPPSPDPLPP). Residues 12–22 (PSPPSPDPLPP) show a composition bias toward pro residues. 14 helical membrane-spanning segments follow: residues 27-47 (LTLR…VVIH), 51-71 (LTVG…FFLA), 102-122 (CAIA…IFAM), 147-167 (LGWM…SIVM), 209-229 (LVKY…FSGV), 268-288 (IVNC…WPFI), 315-335 (IAIS…FLII), 383-403 (LAVS…PIIF), 410-430 (LVLV…YGMG), 443-463 (IALF…AGLA), 501-521 (IGVA…WTAF), 557-577 (LEIC…KDVV), 595-615 (FYIG…LFAW), and 633-653 (GLIC…ILGV).

The protein belongs to the YSL (TC 2.A.67.2) family. In terms of tissue distribution, expressed in roots.

The protein localises to the membrane. May be involved in the transport of nicotianamine-chelated metals. The chain is Probable metal-nicotianamine transporter YSL5 (YSL5) from Oryza sativa subsp. japonica (Rice).